The sequence spans 163 residues: MLKRSLLFLTVLLLLFSFSSITNEVSASSSFDKGKYKKGDDASYFEPTGPYLMVNVTGVDGKGNELLSPHYVEFPIKPGTTLTKEKIEYYVEWALDATAYKEFRVVELDTSAKIEVTYYDKNKKKEETKSFPITEKGFVVPDLSEHIKNPGFNLITKVVIEKK.

An N-terminal signal peptide occupies residues 1–27 (MLKRSLLFLTVLLLLFSFSSITNEVSA).

The protein belongs to the staphylokinase family.

The protein resides in the secreted. In terms of biological role, potent plasminogen activator that converts plasminogen into plasmin. It forms a 1:1 complex with plasmin, which in turn activates other plasminogen molecules. The sequence is that of Staphylokinase (sak) from Staphylococcus aureus (strain MW2).